A 224-amino-acid chain; its full sequence is Ribosomal RNA large subunit methyltransferase E (224 aa).

Residues G64, W66, D97, D113, and D138 each coordinate S-adenosyl-L-methionine. K178 acts as the Proton acceptor in catalysis.

This sequence belongs to the class I-like SAM-binding methyltransferase superfamily. RNA methyltransferase RlmE family.

The protein resides in the cytoplasm. It catalyses the reaction uridine(2552) in 23S rRNA + S-adenosyl-L-methionine = 2'-O-methyluridine(2552) in 23S rRNA + S-adenosyl-L-homocysteine + H(+). Functionally, specifically methylates the uridine in position 2552 of 23S rRNA at the 2'-O position of the ribose in the fully assembled 50S ribosomal subunit. This chain is Ribosomal RNA large subunit methyltransferase E, found in Methylibium petroleiphilum (strain ATCC BAA-1232 / LMG 22953 / PM1).